Reading from the N-terminus, the 439-residue chain is ATP-dependent RNA helicase RhlB (439 aa).

The Q motif motif lies at 9-37 (QKFADLPLCDEVKQALNENGFEHCTPIQA). Positions 40–219 (LPVLLEKKDI…YDHMNDPVKV (180 aa)) constitute a Helicase ATP-binding domain. 53 to 60 (AQTGTGKT) contributes to the ATP binding site. Positions 165–168 (DEAD) match the DEAD box motif. The 148-residue stretch at 243-390 (KLKLLHSLIE…VTSYDRDALI (148 aa)) folds into the Helicase C-terminal domain. The tract at residues 394-439 (PPVKIHRKPHAGGRNLRDRNGSPRPSGSHRSGSGRPPRHDRTRRHS) is disordered. A compositionally biased stretch (low complexity) spans 415-428 (SPRPSGSHRSGSGR). Over residues 429–439 (PPRHDRTRRHS) the composition is skewed to basic residues.

This sequence belongs to the DEAD box helicase family. RhlB subfamily. As to quaternary structure, component of the RNA degradosome, which is a multiprotein complex involved in RNA processing and mRNA degradation.

The protein localises to the cytoplasm. The enzyme catalyses ATP + H2O = ADP + phosphate + H(+). Functionally, DEAD-box RNA helicase involved in RNA degradation. Has RNA-dependent ATPase activity and unwinds double-stranded RNA. This Shewanella amazonensis (strain ATCC BAA-1098 / SB2B) protein is ATP-dependent RNA helicase RhlB.